Consider the following 309-residue polypeptide: Uricase (309 aa).

Ala-2 bears the N-acetylalanine mark. Catalysis depends on charge relay system residues Lys-16 and Thr-63. Urate is bound by residues Thr-63, Asp-64, Phe-165, Arg-182, Val-237, Gln-238, and Asn-264. His-266 functions as the Charge relay system in the catalytic mechanism. The Microbody targeting signal motif lies at 307 to 309 (SKL).

This sequence belongs to the uricase family.

It is found in the peroxisome. The enzyme catalyses urate + O2 + H2O = 5-hydroxyisourate + H2O2. The protein operates within purine metabolism; urate degradation; (S)-allantoin from urate: step 1/3. Its function is as follows. Catalyzes the oxidation of uric acid to 5-hydroxyisourate, which is further processed to form (S)-allantoin. In Arabidopsis thaliana (Mouse-ear cress), this protein is Uricase.